The chain runs to 221 residues: Translation initiation factor 6 (221 aa).

It belongs to the eIF-6 family.

Binds to the 50S ribosomal subunit and prevents its association with the 30S ribosomal subunit to form the 70S initiation complex. This chain is Translation initiation factor 6, found in Natronomonas pharaonis (strain ATCC 35678 / DSM 2160 / CIP 103997 / JCM 8858 / NBRC 14720 / NCIMB 2260 / Gabara) (Halobacterium pharaonis).